Reading from the N-terminus, the 1236-residue chain is Calcium-activated potassium channel subunit alpha-1 (1236 aa).

Residues M1–S21 show a composition bias toward gly residues. A disordered region spans residues M1–V61. Residues M1 to M86 are Extracellular-facing. Residues S39–S60 are compositionally biased toward low complexity. Residues W87 to L107 traverse the membrane as a helical segment. Over W108–R178 the chain is Cytoplasmic. 3 S-palmitoyl cysteine lipidation sites follow: C118, C119, and C121. The chain crosses the membrane as a helical span at residues V179–S199. Residues S200–T214 lie on the Extracellular side of the membrane. The chain crosses the membrane as a helical span at residues L215–A235. At A236–K239 the chain is on the cytoplasmic side. Residues L240–V260 form a helical membrane-spanning segment. The Extracellular segment spans residues S261 to L264. Residues N265 to I285 traverse the membrane as a helical segment. Residues L286–L300 are Cytoplasmic-facing. The helical transmembrane segment at V301–V321 threads the bilayer. Residues E322–Q335 lie on the Extracellular side of the membrane. Positions A336–V358 form an intramembrane region, pore-forming. The short motif at T352 to Y355 is the Selectivity for potassium element. Topologically, residues Y359–L367 are extracellular. The chain crosses the membrane as a helical span at residues F368 to I388. Residues E389–L1236 lie on the Cytoplasmic side of the membrane. One can recognise an RCK N-terminal 1 domain in the interval R407 to I549. E439, Q462, and E464 together coordinate Mg(2+). The segment at L556–F576 is segment S7. Residues L613–I633 are segment S8. Residues C677–H681 are heme-binding motif. Residues E757–R787 are disordered. Phosphothreonine is present on T763. Residues S765, S778, and S782 each carry the phosphoserine modification. The tract at residues V837–L857 is segment S9. Positions S839–P983 constitute an RCK N-terminal 2 domain. T970 bears the Phosphothreonine mark. A phosphoserine mark is found at S978 and S982. The Calcium bowl signature appears at T1003–E1025. Q1012, D1015, D1018, and D1020 together coordinate Ca(2+). The interval F1032–F1052 is segment S10. Low complexity predominate over residues R1186–S1211. A disordered region spans residues R1186–L1236. Positions K1220–L1236 are enriched in basic and acidic residues. 2 positions are modified to phosphoserine: S1221 and S1224.

It belongs to the potassium channel family. Calcium-activated (TC 1.A.1.3) subfamily. KCa1.1/KCNMA1 sub-subfamily. As to quaternary structure, homotetramer; which constitutes the calcium-activated potassium channel. Interacts with RAB11B. Interacts with beta subunits KCNMB1, KCNMB2, KCNMB3 and KCNMB4. Interacts with gamma subunits LRRC26, LRRC38, LRRC52 and LRRC55. Beta and gamma subunits are accessory, and modulate its activity. Post-translationally, phosphorylated. Phosphorylation by kinases such as PKA and/or PKG. In smooth muscles, phosphorylation affects its activity. Palmitoylation by ZDHHC22 and ZDHHC23 within the intracellular linker between the S0 and S1 transmembrane domains regulates localization to the plasma membrane. Depalmitoylated by LYPLA1 and LYPLAL1, leading to retard exit from the trans-Golgi network. As to expression, widely expressed. Except in myocytes, it is almost ubiquitously expressed.

It localises to the cell membrane. It carries out the reaction K(+)(in) = K(+)(out). Ethanol and carbon monoxide-bound heme increase channel activation. Heme inhibits channel activation. Potassium channel activated by both membrane depolarization or increase in cytosolic Ca(2+) that mediates export of K(+). It is also activated by the concentration of cytosolic Mg(2+). Its activation dampens the excitatory events that elevate the cytosolic Ca(2+) concentration and/or depolarize the cell membrane. It therefore contributes to repolarization of the membrane potential. Plays a key role in controlling excitability in a number of systems, such as regulation of the contraction of smooth muscle, the tuning of hair cells in the cochlea, regulation of transmitter release, and innate immunity. In smooth muscles, its activation by high level of Ca(2+), caused by ryanodine receptors in the sarcoplasmic reticulum, regulates the membrane potential. In cochlea cells, its number and kinetic properties partly determine the characteristic frequency of each hair cell and thereby helps to establish a tonotopic map. Kinetics of KCNMA1 channels are determined by alternative splicing, phosphorylation status and its combination with modulating beta subunits. Highly sensitive to both iberiotoxin (IbTx) and charybdotoxin (CTX). Possibly induces sleep when activated by melatonin and through melatonin receptor MTNR1A-dependent dissociation of G-beta and G-gamma subunits, leading to increased sensitivity to Ca(2+) and reduced synaptic transmission. In terms of biological role, potassium channel activated by both membrane depolarization or increase in cytosolic Ca(2+) that mediates export of K(+). The chain is Calcium-activated potassium channel subunit alpha-1 from Homo sapiens (Human).